The primary structure comprises 102 residues: Large ribosomal subunit protein bL21 (102 aa).

The protein belongs to the bacterial ribosomal protein bL21 family. As to quaternary structure, part of the 50S ribosomal subunit. Contacts protein L20.

Its function is as follows. This protein binds to 23S rRNA in the presence of protein L20. This chain is Large ribosomal subunit protein bL21, found in Arthrobacter sp. (strain FB24).